A 917-amino-acid chain; its full sequence is Hexokinase-1 (917 aa).

Met-1 bears the N-acetylmethionine mark. Residues 1–10 (MIAAQLLAYY) are mitochondrial-binding peptide (MBP). 2 Hexokinase domains span residues 16-458 (DDQV…MVTA) and 464-906 (AEQH…LITA). ATP contacts are provided by residues Arg-30 and 84-89 (DLGGSS). The hexokinase small subdomain 1 stretch occupies residues 73 to 207 (DGSEKGDFIA…DYDANIVAVV (135 aa)). 84-91 (DLGGSSFR) is a D-glucose 6-phosphate binding site. Residues Ser-155, 172–173 (TK), and 208–209 (ND) contribute to the D-glucose site. Residues 208-447 (NDTVGTMMTC…SDVRFLLSES (240 aa)) are hexokinase large subdomain 1. D-glucose 6-phosphate contacts are provided by Asp-209 and Thr-232. D-glucose is bound by residues Asn-235, Glu-260, and 291-294 (QLFE). The residue at position 337 (Ser-337) is a Phosphoserine. Asn-345 serves as a coordination point for ATP. 413 to 415 (DGS) serves as a coordination point for D-glucose 6-phosphate. Position 425-426 (425-426 (RR)) interacts with ATP. Residues Ser-449 and 532–536 (DLGGT) each bind D-glucose 6-phosphate. Residues 521–655 (DGTENGDFLA…EFDLDVVAVV (135 aa)) form a hexokinase small subdomain 2 region. Residue 532-537 (DLGGTN) coordinates ATP. D-glucose contacts are provided by residues 603 to 604 (SF), 620 to 621 (TK), and 656 to 657 (ND). Residues 656 to 895 (NDTVGTMMTC…CNVSFLLSED (240 aa)) are hexokinase large subdomain 2. Positions 657 and 680 each coordinate D-glucose 6-phosphate. Residue Thr-680 participates in ATP binding. Residues 682-683 (SN), Glu-708, and Glu-742 contribute to the D-glucose site. ATP contacts are provided by residues 747–748 (GM), 784–788 (TKFLS), and 863–867 (TLYKL). Residues 861–863 (DGT) and Ser-897 contribute to the D-glucose 6-phosphate site.

The protein belongs to the hexokinase family. In terms of assembly, monomer. Interacts with RABL2/RABL2A; binds preferentially to GTP-bound RABL2. Interacts with VDAC1. The HK1-VDAC1 complex interacts with ATF2. Interacts (via N-terminal spermatogenic cell-specific region) with PFKM (via C-terminus). Interacts with SMAD5.

It localises to the mitochondrion outer membrane. It is found in the cytoplasm. The protein localises to the cytosol. It carries out the reaction a D-hexose + ATP = a D-hexose 6-phosphate + ADP + H(+). The catalysed reaction is D-fructose + ATP = D-fructose 6-phosphate + ADP + H(+). The enzyme catalyses D-glucose + ATP = D-glucose 6-phosphate + ADP + H(+). It catalyses the reaction D-mannose + ATP = D-mannose 6-phosphate + ADP + H(+). It carries out the reaction D-glucosamine + ATP = D-glucosamine 6-phosphate + ADP + H(+). It functions in the pathway carbohydrate metabolism; hexose metabolism. It participates in carbohydrate degradation; glycolysis; D-glyceraldehyde 3-phosphate and glycerone phosphate from D-glucose: step 1/4. With respect to regulation, hexokinase is an allosteric enzyme inhibited by its product D-glucose 6-phosphate. Hexokinase activity is inhibited by N-acetyl-D-glucosamine. Functionally, catalyzes the phosphorylation of various hexoses, such as D-glucose, D-glucosamine, D-fructose, D-mannose and 2-deoxy-D-glucose, to hexose 6-phosphate (D-glucose 6-phosphate, D-glucosamine 6-phosphate, D-fructose 6-phosphate, D-mannose 6-phosphate and 2-deoxy-D-glucose 6-phosphate, respectively). Does not phosphorylate N-acetyl-D-glucosamine. Mediates the initial step of glycolysis by catalyzing phosphorylation of D-glucose to D-glucose 6-phosphate. Involved in innate immunity and inflammation by acting as a pattern recognition receptor for bacterial peptidoglycan. When released in the cytosol, N-acetyl-D-glucosamine component of bacterial peptidoglycan inhibits the hexokinase activity of HK1 and causes its dissociation from mitochondrial outer membrane, thereby activating the NLRP3 inflammasome. The protein is Hexokinase-1 of Pongo abelii (Sumatran orangutan).